A 747-amino-acid polypeptide reads, in one-letter code: Asparagine synthetase [glutamine-hydrolyzing] 2 (747 aa).

Cys2 functions as the For GATase activity in the catalytic mechanism. The region spanning 2 to 218 (CGLAGIINLA…AGHYLEINLT (217 aa)) is the Glutamine amidotransferase type-2 domain. L-glutamine contacts are provided by residues 52–56 (RLSIL), 77–79 (NGE), and Asp100. Residue 395 to 396 (SP) coordinates ATP.

This sequence belongs to the asparagine synthetase family.

The catalysed reaction is L-aspartate + L-glutamine + ATP + H2O = L-asparagine + L-glutamate + AMP + diphosphate + H(+). It participates in amino-acid biosynthesis; L-asparagine biosynthesis; L-asparagine from L-aspartate (L-Gln route): step 1/1. The sequence is that of Asparagine synthetase [glutamine-hydrolyzing] 2 (asnH) from Bacillus subtilis (strain 168).